A 507-amino-acid chain; its full sequence is RNA demethylase ALKBH9B (507 aa).

2 disordered regions span residues 76–102 and 145–183; these read GSER…DNHS and QEDE…LSRD. The segment covering 89–100 has biased composition (basic and acidic residues); that stretch reads DEKSENGEDCDN. Residues 145–160 show a composition bias toward acidic residues; it reads QEDEFDEEEEEEEEER. A compositionally biased stretch (basic and acidic residues) spans 174-183; sequence TPEKPKLSRD. In terms of domain architecture, Fe2OG dioxygenase spans 317–414; sequence VPDSCIVNIY…RISITFRKMD (98 aa). Fe cation is bound by residues histidine 335, aspartate 337, and histidine 396. Residue arginine 405 participates in 2-oxoglutarate binding. The segment at 432 to 507 is disordered; sequence EPLPLDLNRS…MPRPSRRNYG (76 aa). Polar residues predominate over residues 440–450; it reads RSGSTSRFSRL. Positions 497–507 are enriched in basic residues; that stretch reads GMPRPSRRNYG.

The protein belongs to the alkB family. In terms of assembly, (Microbial infection) Interacts with the capsid protein ORF3b of the alfalfa mosaic virus (AMV). Fe(2+) serves as cofactor.

It localises to the cytoplasm. The protein localises to the P-body. It is found in the cytoplasmic granule. It carries out the reaction an N(6)-methyladenosine in mRNA + 2-oxoglutarate + O2 = an adenosine in mRNA + formaldehyde + succinate + CO2. In terms of biological role, dioxygenase that demethylates RNA by oxidative demethylation: specifically demethylates N(6)-methyladenosine (m6A) RNA, the most prevalent internal modification of messenger RNA (mRNA) in higher eukaryotes. Modulates viral infection of the alfalfa mosaic virus (AMV) and the m6A abundance in its genomic RNAs. This is RNA demethylase ALKBH9B from Arabidopsis thaliana (Mouse-ear cress).